The sequence spans 505 residues: Deoxyguanosinetriphosphate triphosphohydrolase (505 aa).

An HD domain is found at 66-273 (RLTHSMEVQQ…MEAADDISYC (208 aa)).

The protein belongs to the dGTPase family. Type 1 subfamily. As to quaternary structure, homotetramer. Mg(2+) serves as cofactor.

It catalyses the reaction dGTP + H2O = 2'-deoxyguanosine + triphosphate + H(+). DGTPase preferentially hydrolyzes dGTP over the other canonical NTPs. The protein is Deoxyguanosinetriphosphate triphosphohydrolase of Escherichia coli O139:H28 (strain E24377A / ETEC).